We begin with the raw amino-acid sequence, 68 residues long: Non-disulfide-bridged peptide 5.6 (68 aa).

The signal sequence occupies residues Met1 to Ala23. A propeptide spanning residues Glu37–Lys68 is cleaved from the precursor.

This sequence belongs to the non-disulfide-bridged peptide (NDBP) superfamily. Short antimicrobial peptide (group 4) family. As to expression, expressed by the venom gland.

The protein resides in the secreted. Its subcellular location is the target cell membrane. In terms of biological role, antibacterial peptide with activity against both Gram-positive and Gram-negative bacteria probably by forming pores in the cell membrane. Also has weak hemolytic activity. Does not show antifungal activity. The polypeptide is Non-disulfide-bridged peptide 5.6 (Hoffmannihadrurus gertschi (Scorpion)).